The chain runs to 1424 residues: Putative disease resistance protein At3g14460 (1424 aa).

An NB-ARC domain is found at 152-454 (WRQASRSRPD…AIDLLYQPRS (303 aa)). 200–207 (GMPGVGKT) provides a ligand contact to ATP. 7 LRR repeats span residues 498-523 (VSGD…HFSF), 552-571 (PTSL…LLNA), 572-595 (LSGL…LKGL), 597-618 (LLRY…VCTL), 620-641 (NLQT…SIAE), 642-665 (LINL…IKKL), and 806-830 (LPSL…FFFG). 2 disordered regions span residues 911–977 (FRRS…PKDR) and 1050–1070 (IKSS…QYDD). Composition is skewed to polar residues over residues 912 to 927 (RRSL…SIPS) and 934 to 972 (SSPT…SLSS). LRR repeat units follow at residues 1090-1114 (PQNL…LTES), 1118-1139 (LHEL…HPPT), 1238-1262 (TPKL…LFGL), 1264-1286 (SLLS…GFPS), and 1310-1336 (LENL…LLPK).

The protein belongs to the disease resistance NB-LRR family.

Functionally, potential disease resistance protein. This Arabidopsis thaliana (Mouse-ear cress) protein is Putative disease resistance protein At3g14460.